A 187-amino-acid chain; its full sequence is 1,6-anhydro-N-acetylmuramyl-L-alanine amidase AmpD (187 aa).

The region spanning 29-167 is the N-acetylmuramoyl-L-alanine amidase domain; that stretch reads TLLVVHNISL…APERKTDPGP (139 aa). Histidine 34 provides a ligand contact to Zn(2+). Glutamate 116 serves as the catalytic Proton acceptor. Zn(2+) contacts are provided by histidine 154 and aspartate 164.

Belongs to the N-acetylmuramoyl-L-alanine amidase 2 family. The cofactor is Zn(2+).

The protein resides in the cytoplasm. The catalysed reaction is Hydrolyzes the link between N-acetylmuramoyl residues and L-amino acid residues in certain cell-wall glycopeptides.. Functionally, involved in cell wall peptidoglycan recycling. Specifically cleaves the amide bond between the lactyl group of N-acetylmuramic acid and the alpha-amino group of the L-alanine in degradation products containing an anhydro N-acetylmuramyl moiety. In Enterobacter cloacae, this protein is 1,6-anhydro-N-acetylmuramyl-L-alanine amidase AmpD.